The sequence spans 103 residues: Large ribosomal subunit protein bL21 (103 aa).

Belongs to the bacterial ribosomal protein bL21 family. As to quaternary structure, part of the 50S ribosomal subunit. Contacts protein L20.

Functionally, this protein binds to 23S rRNA in the presence of protein L20. The protein is Large ribosomal subunit protein bL21 of Shewanella baltica (strain OS223).